A 274-amino-acid polypeptide reads, in one-letter code: Hydroxyethylthiazole kinase (274 aa).

Met54 lines the substrate pocket. Residues Arg129 and Thr175 each coordinate ATP. A substrate-binding site is contributed by Gly202.

It belongs to the Thz kinase family. It depends on Mg(2+) as a cofactor.

It carries out the reaction 5-(2-hydroxyethyl)-4-methylthiazole + ATP = 4-methyl-5-(2-phosphooxyethyl)-thiazole + ADP + H(+). The protein operates within cofactor biosynthesis; thiamine diphosphate biosynthesis; 4-methyl-5-(2-phosphoethyl)-thiazole from 5-(2-hydroxyethyl)-4-methylthiazole: step 1/1. Its function is as follows. Catalyzes the phosphorylation of the hydroxyl group of 4-methyl-5-beta-hydroxyethylthiazole (THZ). This Granulibacter bethesdensis (strain ATCC BAA-1260 / CGDNIH1) protein is Hydroxyethylthiazole kinase.